The primary structure comprises 179 residues: Large ribosomal subunit protein uL6 (179 aa).

The protein belongs to the universal ribosomal protein uL6 family. In terms of assembly, part of the 50S ribosomal subunit.

Functionally, this protein binds to the 23S rRNA, and is important in its secondary structure. It is located near the subunit interface in the base of the L7/L12 stalk, and near the tRNA binding site of the peptidyltransferase center. In Chlorobium phaeovibrioides (strain DSM 265 / 1930) (Prosthecochloris vibrioformis (strain DSM 265)), this protein is Large ribosomal subunit protein uL6.